Reading from the N-terminus, the 115-residue chain is U3-lycotoxin-Ls1k (115 aa).

Residues 1–20 (MKFVLLFGVLLVALFSYSSA) form the signal peptide. The propeptide occupies 21–44 (EMLDDFGQADEDELLSLIEKEEAR). Disulfide bonds link C48–C63, C55–C72, C62–C87, and C74–C85.

It belongs to the neurotoxin 19 (CSTX) family. 01 subfamily. In terms of tissue distribution, expressed by the venom gland.

The protein resides in the secreted. This is U3-lycotoxin-Ls1k from Lycosa singoriensis (Wolf spider).